Reading from the N-terminus, the 635-residue chain is DNA-directed RNA polymerase subunit gamma (635 aa).

Positions 74, 76, 89, and 92 each coordinate Zn(2+). Mg(2+) contacts are provided by Asp-471, Asp-473, and Asp-475.

The protein belongs to the RNA polymerase beta' chain family. RpoC1 subfamily. In terms of assembly, in cyanobacteria the RNAP catalytic core is composed of 2 alpha, 1 beta, 1 beta', 1 gamma and 1 omega subunit. When a sigma factor is associated with the core the holoenzyme is formed, which can initiate transcription. It depends on Mg(2+) as a cofactor. Zn(2+) is required as a cofactor.

The enzyme catalyses RNA(n) + a ribonucleoside 5'-triphosphate = RNA(n+1) + diphosphate. In terms of biological role, DNA-dependent RNA polymerase catalyzes the transcription of DNA into RNA using the four ribonucleoside triphosphates as substrates. The protein is DNA-directed RNA polymerase subunit gamma of Prochlorococcus marinus (strain NATL2A).